The following is a 132-amino-acid chain: Fatty acid-binding protein 12 (132 aa).

A fatty acid contacts are provided by residues arginine 107 and 127–129 (RTY).

The protein belongs to the calycin superfamily. Fatty-acid binding protein (FABP) family. In terms of tissue distribution, highly expressed in adult retina and testis with lower levels in cerebral cortex, kidney and epididymis. In the retina, strongly expressed in the ganglion cell layer and throughout the inner nuclear layer in amacrine and bipolar cells. Not expressed in the outer nuclear layer. In the testis, detected in the seminiferous tubules.

Functionally, may play a role in lipid transport. The polypeptide is Fatty acid-binding protein 12 (Rattus norvegicus (Rat)).